The following is a 199-amino-acid chain: NAD(P)H dehydrogenase (quinone) (199 aa).

In terms of domain architecture, Flavodoxin-like spans 4–190 (VLVLYYSAYG…AGARYQGRQI (187 aa)). Residues 10-15 (SAYGHI) and 78-80 (TRF) each bind FMN. Residue Tyr12 participates in NAD(+) binding. Trp98 lines the substrate pocket. FMN-binding positions include 113–119 (SSATQHG) and His134.

This sequence belongs to the WrbA family. It depends on FMN as a cofactor.

It carries out the reaction a quinone + NADH + H(+) = a quinol + NAD(+). The catalysed reaction is a quinone + NADPH + H(+) = a quinol + NADP(+). The polypeptide is NAD(P)H dehydrogenase (quinone) (Bradyrhizobium diazoefficiens (strain JCM 10833 / BCRC 13528 / IAM 13628 / NBRC 14792 / USDA 110)).